Here is an 867-residue protein sequence, read N- to C-terminus: Translation initiation factor IF-2 (867 aa).

A tr-type G domain is found at 367 to 534; sequence TRAPVVTIMG…AILLQSEILE (168 aa). The G1 stretch occupies residues 376–383; the sequence is GHVDHGKT. Residue 376 to 383 coordinates GTP; it reads GHVDHGKT. The G2 stretch occupies residues 401-405; sequence GITQN. Positions 422 to 425 are G3; that stretch reads DTPG. GTP-binding positions include 422–426 and 476–479; these read DTPGH and NKID. A G4 region spans residues 476 to 479; the sequence is NKID. Residues 512-514 form a G5 region; that stretch reads SAK.

This sequence belongs to the TRAFAC class translation factor GTPase superfamily. Classic translation factor GTPase family. IF-2 subfamily.

The protein resides in the cytoplasm. Functionally, one of the essential components for the initiation of protein synthesis. Protects formylmethionyl-tRNA from spontaneous hydrolysis and promotes its binding to the 30S ribosomal subunits. Also involved in the hydrolysis of GTP during the formation of the 70S ribosomal complex. The chain is Translation initiation factor IF-2 from Buchnera aphidicola subsp. Schizaphis graminum (strain Sg).